The sequence spans 143 residues: Type II secretion system core protein G (143 aa).

Residues 1–17 (MIKRSITRSPSRAGQAG) constitute a propeptide, leader sequence. Met-18 carries the N-methylmethionine modification. Residues 18 to 38 (MSLLEIIIVIVLIGAVLTLVG) traverse the membrane as a helical segment.

It belongs to the GSP G family. Type II secretion system is composed of four main components: the outer membrane complex, the inner membrane complex, the cytoplasmic secretion ATPase and the periplasm-spanning pseudopilus. Forms homomultimers. Interacts with pseudopilin tip complex component XpsJ as well as XpsI and XcpH. Interacts with XpsN and secretin XpsD. Post-translationally, cleaved by the prepilin peptidase. In terms of processing, methylated by prepilin peptidase at the amino group of the N-terminal methionine once the leader sequence is cleaved.

It localises to the cell inner membrane. Its function is as follows. Core component of the type II secretion system required for the energy-dependent secretion of extracellular factors such as proteases and toxins from the periplasm. Pseudopilin (pilin-like) protein that polymerizes to form the pseudopilus. Further polymerization triggers pseudopilus growth. The sequence is that of Type II secretion system core protein G (xpsG) from Xanthomonas campestris pv. campestris (strain ATCC 33913 / DSM 3586 / NCPPB 528 / LMG 568 / P 25).